The following is a 346-amino-acid chain: Upstream stimulatory factor 2 (346 aa).

2 disordered regions span residues 1-44 (MDML…PGAE) and 215-244 (APRT…NEVE). Residues 11–20 (ASSATAAAAA) are compositionally biased toward low complexity. The span at 226–244 (DGTRTPRDERRRAQHNEVE) shows a compositional bias: basic and acidic residues. Residues 235–290 (RRRAQHNEVERRRRDKINNWIVQLSKIIPDCHADNSKTGASKGGILSKACDYIREL) form the bHLH domain. The tract at residues 307 to 328 (LQMDNELLRQQIEELKNENALL) is leucine-zipper.

As to quaternary structure, efficient DNA binding requires dimerization with another bHLH protein. Binds DNA as a homodimer or a heterodimer (USF1/USF2). Interacts with MAF.

It localises to the nucleus. Functionally, transcription factor that binds to a symmetrical DNA sequence (E-boxes) (5'-CACGTG-3') that is found in a variety of viral and cellular promoters. This Mus musculus (Mouse) protein is Upstream stimulatory factor 2 (Usf2).